The following is a 215-amino-acid chain: L-fuculose phosphate aldolase (215 aa).

Substrate contacts are provided by residues 28 to 29, 43 to 44, and 71 to 72; these read GN, TG, and SS. The Proton donor/acceptor role is filled by Glu-73. Glu-73, His-92, His-94, and His-155 together coordinate Zn(2+).

It belongs to the aldolase class II family. AraD/FucA subfamily. As to quaternary structure, homotetramer. Zn(2+) serves as cofactor.

It carries out the reaction L-fuculose 1-phosphate = (S)-lactaldehyde + dihydroxyacetone phosphate. It participates in carbohydrate degradation; L-fucose degradation; L-lactaldehyde and glycerone phosphate from L-fucose: step 3/3. Its function is as follows. Involved in the degradation of L-fucose and D-arabinose. Catalyzes the reversible cleavage of L-fuculose 1-phosphate (Fuc1P) to yield dihydroxyacetone phosphate (DHAP) and L-lactaldehyde. This Escherichia coli O6:H1 (strain CFT073 / ATCC 700928 / UPEC) protein is L-fuculose phosphate aldolase.